The following is a 772-amino-acid chain: DnaJ homolog subfamily C member 16 (772 aa).

Positions 1–25 are cleaved as a signal peptide; that stretch reads MELKRLGVSWRFLMVLVLILQSLSA. Residues 26–533 lie on the Cytoplasmic side of the membrane; the sequence is LDFDPYRVLG…ESLLHSNWRE (508 aa). The 65-residue stretch at 29–93 folds into the J domain; it reads DPYRVLGVSR…EKRTNYDHYG (65 aa). The Thioredoxin domain maps to 119–245; the sequence is FDESFFHFPF…LRQFVESLLP (127 aa). Residues 534-554 form a helical; Anchor for type IV membrane protein membrane-spanning segment; that stretch reads MMPLLSLIFSALFILFGTVMV. At 555 to 772 the chain is on the extracellular side; sequence QAFSDSNEER…FYIPSWPELD (218 aa). Residues 560–591 are disordered; sequence SNEERESHPADKEEVPEKAGKTEPSFTKESSS. Basic and acidic residues predominate over residues 561–580; the sequence is NEERESHPADKEEVPEKAGK. N-linked (GlcNAc...) asparagine glycosylation occurs at N629.

The protein localises to the endoplasmic reticulum membrane. Functionally, plays an important role in regulating the size of autophagosomes during the formation process. The sequence is that of DnaJ homolog subfamily C member 16 (Dnajc16) from Mus musculus (Mouse).